Here is a 102-residue protein sequence, read N- to C-terminus: Large ribosomal subunit protein bL21 (102 aa).

This sequence belongs to the bacterial ribosomal protein bL21 family. Part of the 50S ribosomal subunit. Contacts protein L20.

This protein binds to 23S rRNA in the presence of protein L20. This Solidesulfovibrio magneticus (strain ATCC 700980 / DSM 13731 / RS-1) (Desulfovibrio magneticus) protein is Large ribosomal subunit protein bL21.